The sequence spans 371 residues: Vasculin (371 aa).

It belongs to the vasculin family.

Its subcellular location is the nucleus. Functions as a GC-rich promoter-specific transactivating transcription factor. The sequence is that of Vasculin (gpbp1) from Xenopus laevis (African clawed frog).